The primary structure comprises 581 residues: Arginine--tRNA ligase (581 aa).

The short motif at 131-141 is the 'HIGH' region element; that stretch reads ANPTGPLHVGH.

This sequence belongs to the class-I aminoacyl-tRNA synthetase family. Monomer.

It localises to the cytoplasm. It catalyses the reaction tRNA(Arg) + L-arginine + ATP = L-arginyl-tRNA(Arg) + AMP + diphosphate. The polypeptide is Arginine--tRNA ligase (Nitrosospira multiformis (strain ATCC 25196 / NCIMB 11849 / C 71)).